Here is a 539-residue protein sequence, read N- to C-terminus: Nucleoporin NUP60 (539 aa).

Phosphoserine occurs at positions 10, 49, 81, and 89. The segment at 44 to 80 is disordered; it reads DSARVSPRNNVANKQPRNESFNRRISSMPGGYFHSEI. Positions 91-118 form a coiled coil; sequence VVSAVGEARNDIENKEEEYDETHETNIS. Serine 162, serine 171, serine 214, and serine 222 each carry phosphoserine. Composition is skewed to polar residues over residues 242–252 and 258–267; these read TANTSAQSIAS and SGVSKSAPSK. Disordered stretches follow at residues 242–267, 305–329, and 347–493; these read TANT…APSK, IRKH…TTVK, and NATK…GKHI. A compositionally biased stretch (polar residues) spans 347-359; the sequence is NATKISPSAPSKD. A phosphoserine mark is found at serine 352, serine 360, serine 374, and serine 382. Composition is skewed to polar residues over residues 395–433 and 448–485; these read SAFN…TNLQ and GDST…LSQE. FXF repeat units follow at residues 399–401 and 427–429; these read FSF and FNF. Residue threonine 460 is modified to Phosphothreonine. One copy of the FXF 3 repeat lies at 469-471; that stretch reads FVF. Serine 480 and serine 483 each carry phosphoserine. The stretch at 509–511 is one FXF 4 repeat; sequence FDF.

In terms of assembly, component of the nuclear pore complex (NPC). NPC constitutes the exclusive means of nucleocytoplasmic transport. NPCs allow the passive diffusion of ions and small molecules and the active, nuclear transport receptor-mediated bidirectional transport of macromolecules such as proteins, RNAs, ribonucleoparticles (RNPs), and ribosomal subunits across the nuclear envelope. Due to its 8-fold rotational symmetry, all subunits are present with 8 copies or multiples thereof. Binds to NUP1 and NUP2 forming the nuclear basket and the distal ring. The interaction with NUP2 is GSP1-GTP-dependent. Interacts through its FG repeats with karyopherins, such as KAP123 and KAP95-SRP1 (KAP60). Also interacts with GSP1-GTP and SRM1 (PRP20), where NUP60 reduces SRM1 activity, thus inhibiting GSP1 guanine nucleotide dissociation. In terms of processing, phosphorylated by CDC28.

It is found in the nucleus. The protein localises to the nuclear pore complex. The protein resides in the nucleus membrane. Functionally, functions as a component of the nuclear pore complex (NPC). NPC components, collectively referred to as nucleoporins (NUPs), can play the role of both NPC structural components and of docking or interaction partners for transiently associated nuclear transport factors. Active directional transport is assured by both, a Phe-Gly (FG) repeat affinity gradient for these transport factors across the NPC and a transport cofactor concentration gradient across the nuclear envelope (GSP1 and GSP2 GTPases associated predominantly with GTP in the nucleus, with GDP in the cytoplasm). The sequence is that of Nucleoporin NUP60 (NUP60) from Saccharomyces cerevisiae (strain ATCC 204508 / S288c) (Baker's yeast).